Consider the following 397-residue polypeptide: DnaJ homolog subfamily A member 1 (397 aa).

The 63-residue stretch at 6–68 (TYYDVLGVKP…KKRELYDKGG (63 aa)) folds into the J domain. The residue at position 66 (lysine 66) is an N6-acetyllysine. Serine 83 bears the Phosphoserine mark. A CR-type zinc finger spans residues 121–205 (GATRKLALQK…CNGRKIVREK (85 aa)). Cysteine 134, cysteine 137, cysteine 150, cysteine 153, cysteine 177, cysteine 180, cysteine 193, and cysteine 196 together coordinate Zn(2+). CXXCXGXG motif repeat units follow at residues 134–141 (CDKCEGRG), 150–157 (CPNCRGTG), 177–184 (CMECQGHG), and 193–200 (CKSCNGRK). The residue at position 335 (serine 335) is a Phosphoserine. A disordered region spans residues 352–397 (VEETDEMDQVELVDFDPNQERRRHYNGEAYEDDEHHPRGGVQCQTS). Positions 353-365 (EETDEMDQVELVD) are enriched in acidic residues. Tyrosine 381 bears the Phosphotyrosine mark. Cysteine 394 is subject to Cysteine methyl ester. Residue cysteine 394 is the site of S-farnesyl cysteine attachment. Residues 395 to 397 (QTS) constitute a propeptide, removed in mature form.

Identified in a complex with HSPA1B and BAX. Interacts with RNF207.

It localises to the membrane. The protein resides in the cytoplasm. The protein localises to the microsome. It is found in the mitochondrion. Its subcellular location is the nucleus. It localises to the perinuclear region. In terms of biological role, co-chaperone for HSPA8/Hsc70. Plays a role in protein transport into mitochondria via its role as co-chaperone. Functions as co-chaperone for HSPA1B and negatively regulates the translocation of BAX from the cytosol to mitochondria in response to cellular stress, thereby protecting cells against apoptosis. Stimulates ATP hydrolysis, but not the folding of unfolded proteins mediated by HSPA1A (in vitro). Promotes apoptosis in response to cellular stress mediated by exposure to anisomycin or UV. The sequence is that of DnaJ homolog subfamily A member 1 (DNAJA1) from Bos taurus (Bovine).